The following is a 678-amino-acid chain: MTKNLLVELGLEELPAYVVTPSEKQLGEKMAAFLGENRLSYESIQTFSTPRRLAVRVLGLADQQTDLTEDFKGPSKKIALDADGNFSKAAQGFVRGKGLTVDDIEFREVKGEEYVYVTKHEAGKSAKEVLAGIPEVLASLTFPVSMHWANNSFEYIRPVHTLIVLLGDEALELDFLGIKSGRVSRGHRFLGHEVEITNADSYEEDLRTVYVIADSKERENMIREQIKAIEAEQGVQVQIEEGLLNEVLNLVEYPTTFMGGFDTKYLDVPEDVLVTSMETHQRYFVVRDLDGRLKPNFISVRNGNAEHLENVVRGNEKVLVARLEDGEFFWREDQKLKIEDLVAKLANVTFHEKIGSLSEHMARAGVIAASLAEKAGLTAEEKAAVARAAEIYKFDLLTGMVGEFDELQGIMGEKYALLAGEDEAVATAIREHYLPDSADGALPETKVGAILALADKLDTLLSFFSVGLIPSGSNDPYALRRATQGIVRILDAFGWHIPMDELIDSLYGLSFDSLSYDNQAEVIRFIKARVDKMMGSTPKDIKEAVLSGSNFVVADMLEAAEALSEAAKTDGYKAAVESLSRAFNLAEKADTSVAVDASLFENDQEKALAQVAESLELTGSASDKLAQLFVLSPVIDAFFDNTMVMADDVAVKNNRLALLSALVAKAKTVAAFNQLNTK.

It belongs to the class-II aminoacyl-tRNA synthetase family. In terms of assembly, tetramer of two alpha and two beta subunits.

The protein localises to the cytoplasm. It carries out the reaction tRNA(Gly) + glycine + ATP = glycyl-tRNA(Gly) + AMP + diphosphate. This Streptococcus thermophilus (strain ATCC BAA-491 / LMD-9) protein is Glycine--tRNA ligase beta subunit.